We begin with the raw amino-acid sequence, 202 residues long: Endothelin-1 (202 aa).

Residues 1–25 (MDYFPVIFSLLFVAFQGAPETAVLG) form the signal peptide. Positions 26–50 (AELSPRAEKEVQSPPPSTSWRPRRS) are excised as a propeptide. The segment at 28–47 (LSPRAEKEVQSPPPSTSWRP) is disordered. Intrachain disulfides connect Cys-53/Cys-67 and Cys-55/Cys-63. A propeptide spanning residues 74–202 (VNTPERVVPY…DQKLIHNRAH (129 aa)) is cleaved from the precursor. An endothelin-like region spans residues 110-124 (CQCAHQKDKKCWNFC).

The protein belongs to the endothelin/sarafotoxin family.

It is found in the secreted. In terms of biological role, endothelins are endothelium-derived vasoconstrictor peptides. Probable ligand for G-protein coupled receptors EDNRA and EDNRB which activates PTK2B, BCAR1, BCAR3 and, GTPases RAP1 and RHOA cascade in glomerular mesangial cells. Also binds the DEAR/FBXW7-AS1 receptor. Promotes mesenteric arterial wall remodeling via activation of ROCK signaling and subsequent colocalization of NFATC3 with F-actin filaments. NFATC3 then translocates to the nucleus where it subsequently promotes the transcription of the smooth muscle hypertrophy and differentiation marker ACTA2. This Rattus norvegicus (Rat) protein is Endothelin-1 (Edn1).